Here is a 511-residue protein sequence, read N- to C-terminus: Myrosinase 5 (511 aa).

Residues 1–23 (MAIPKAHYSLAVLVLLFVVVSSS) form the signal peptide. Intrachain disulfides connect Cys31–Cys450, Cys39–Cys445, and Cys230–Cys233. N-linked (GlcNAc...) asparagine glycosylation is found at Asn46 and Asn53. Residues Gln64, His165, and 210-211 (NQ) each bind a beta-D-glucoside. N-linked (GlcNAc...) asparagine glycosylation occurs at Asn222. Residues Tyr351 and Glu418 each contribute to the a beta-D-glucoside site. Catalysis depends on Glu418, which acts as the Nucleophile. Asn428 carries N-linked (GlcNAc...) asparagine glycosylation. A beta-D-glucoside-binding positions include Trp467, 474-475 (EF), and Phe483. Residue Asn489 is glycosylated (N-linked (GlcNAc...) asparagine).

The protein belongs to the glycosyl hydrolase 1 family. In terms of tissue distribution, specifically expressed in roots.

The enzyme catalyses a thioglucoside + H2O = a sugar + a thiol.. It catalyses the reaction Hydrolysis of terminal, non-reducing beta-D-glucosyl residues with release of beta-D-glucose.. Hydrolyzes sinigrin and, with lower efficiency, p-nitrophenyl beta-D-glucoside. In Arabidopsis thaliana (Mouse-ear cress), this protein is Myrosinase 5.